A 216-amino-acid chain; its full sequence is Probable inactive E3 ubiquitin-protein ligase SINAT6 (216 aa).

The segment at 5 to 74 (INDLQVESRV…LLLHLRNDHN (70 aa)) adopts an SIAH-type zinc-finger fold.

The protein belongs to the SINA (Seven in absentia) family. Homodimer. Interacts with SINAT1, SINAT2, SINAT3, SINAT4 and SINAT5. Interacts with ATG6 and TRAF1A. In terms of tissue distribution, expressed in roots, rosette leaves, cauline leaves, guard cells and flowers.

Its subcellular location is the cytoplasm. It localises to the nucleus. Functionally, probable inactive E3 ubiquitin-protein ligase that plays a role in regulation of autophagy. Upon starvation, involved in maintaining ATG6 homeostasis by competitively associating with ATG6, a component of the autophagosome complex. Acts as a positive regulator of drought stress response. Functions as a positive regulator of abscisic acid-mediated stomatal closure. The protein is Probable inactive E3 ubiquitin-protein ligase SINAT6 of Arabidopsis thaliana (Mouse-ear cress).